Consider the following 136-residue polypeptide: Histone H3.2 (136 aa).

A disordered region spans residues 1–45 (MARTKQTARKSTGGKAPRKQLATKAARKSAPATGGVKKPHRYRPG). Arg3 carries the asymmetric dimethylarginine; by PRMT6; alternate modification. Residue Arg3 is modified to Citrulline; alternate. Thr4 carries the phosphothreonine; by HASPIN and VRK1 modification. Position 5 is an allysine; alternate (Lys5). Lys5 is subject to N6,N6,N6-trimethyllysine; alternate. The residue at position 5 (Lys5) is an N6,N6-dimethyllysine; alternate. The residue at position 5 (Lys5) is an N6-(2-hydroxyisobutyryl)lysine; alternate. Lys5 is modified (N6-(beta-hydroxybutyryl)lysine; alternate). At Lys5 the chain carries N6-acetyllysine; alternate. Lys5 is subject to N6-crotonyllysine; alternate. At Lys5 the chain carries N6-methyllysine; alternate. Gln6 is subject to 5-glutamyl dopamine; alternate. Residue Gln6 is modified to 5-glutamyl serotonin; alternate. Position 7 is a phosphothreonine; by PKC (Thr7). At Arg9 the chain carries Citrulline; alternate. At Arg9 the chain carries Symmetric dimethylarginine; by PRMT5; alternate. An N6,N6,N6-trimethyllysine; alternate modification is found at Lys10. Lys10 is modified (N6,N6-dimethyllysine; alternate). Position 10 is an N6-(2-hydroxyisobutyryl)lysine; alternate (Lys10). Position 10 is an N6-(beta-hydroxybutyryl)lysine; alternate (Lys10). Lys10 bears the N6-acetyllysine; alternate mark. Lys10 is modified (N6-crotonyllysine; alternate). Residue Lys10 is modified to N6-methyllysine; alternate. Position 10 is an N6-lactoyllysine; alternate (Lys10). An ADP-ribosylserine; alternate modification is found at Ser11. A Phosphoserine; alternate; by AURKB, AURKC, RPS6KA3, RPS6KA4 and RPS6KA5 modification is found at Ser11. Thr12 carries the post-translational modification Phosphothreonine; by PKC. Lys15 is subject to N6-(2-hydroxyisobutyryl)lysine; alternate. The residue at position 15 (Lys15) is an N6-(beta-hydroxybutyryl)lysine; alternate. Position 15 is an N6-acetyllysine; alternate (Lys15). Lys15 carries the N6-lactoyllysine; alternate modification. Lys15 is subject to N6-glutaryllysine; alternate. Residue Lys15 is modified to N6-succinyllysine; alternate. At Arg18 the chain carries Citrulline; alternate. Position 18 is an asymmetric dimethylarginine; by CARM1; alternate (Arg18). Lys19 and Lys24 each carry N6-(2-hydroxyisobutyryl)lysine; alternate. N6-(beta-hydroxybutyryl)lysine; alternate occurs at positions 19 and 24. N6-acetyllysine; alternate occurs at positions 19 and 24. An N6-crotonyllysine; alternate mark is found at Lys19 and Lys24. 2 positions are modified to N6-methyllysine; alternate: Lys19 and Lys24. An N6-lactoyllysine; alternate mark is found at Lys19 and Lys24. N6-glutaryllysine; alternate occurs at positions 19 and 24. N6-butyryllysine; alternate is present on residues Lys19 and Lys24. The N6-decanoyllysine moiety is linked to residue Lys19. Arg27 carries the post-translational modification Citrulline. Lys28 is subject to N6,N6,N6-trimethyllysine; alternate. N6,N6-dimethyllysine; alternate is present on Lys28. Lys28 is subject to N6-(2-hydroxyisobutyryl)lysine; alternate. Lys28 carries the N6-acetyllysine; alternate modification. At Lys28 the chain carries N6-crotonyllysine; alternate. N6-methyllysine; alternate is present on Lys28. Lys28 is modified (N6-lactoyllysine; alternate). Lys28 carries the post-translational modification N6-glutaryllysine; alternate. An ADP-ribosylserine; alternate modification is found at Ser29. Position 29 is a phosphoserine; alternate; by AURKB, AURKC and RPS6KA5 (Ser29). Lys37 carries the N6,N6,N6-trimethyllysine; alternate modification. Residue Lys37 is modified to N6,N6-dimethyllysine; alternate. An N6-(2-hydroxyisobutyryl)lysine; alternate modification is found at Lys37. Lys37 carries the post-translational modification N6-acetyllysine; alternate. Lys37 is subject to N6-methyllysine; alternate. N6-methyllysine is present on Lys38. At Tyr42 the chain carries Phosphotyrosine. Residue Lys57 is modified to N6,N6,N6-trimethyllysine; alternate. Lys57 is subject to N6-(2-hydroxyisobutyryl)lysine; alternate. Lys57 carries the post-translational modification N6-(beta-hydroxybutyryl)lysine; alternate. An N6-acetyllysine; alternate modification is found at Lys57. Lys57 is subject to N6-crotonyllysine; alternate. Lys57 is subject to N6-lactoyllysine; alternate. The residue at position 57 (Lys57) is an N6-glutaryllysine; alternate. At Lys57 the chain carries N6-succinyllysine; alternate. The residue at position 57 (Lys57) is an N6-methyllysine; by EHMT2; alternate. Residue Ser58 is modified to Phosphoserine. An N6-(2-hydroxyisobutyryl)lysine; alternate mark is found at Lys65 and Lys80. Residues Lys65 and Lys80 each carry the N6-methyllysine; alternate modification. Position 80 is an N6,N6,N6-trimethyllysine; alternate (Lys80). Lys80 carries the N6,N6-dimethyllysine; alternate modification. N6-acetyllysine; alternate is present on Lys80. N6-lactoyllysine; alternate is present on Lys80. Lys80 is modified (N6-glutaryllysine; alternate). At Lys80 the chain carries N6-succinyllysine; alternate. Residue Thr81 is modified to Phosphothreonine. A Phosphoserine modification is found at Ser87. The residue at position 108 (Thr108) is a Phosphothreonine. Cys111 is lipidated: S-palmitoyl cysteine. Residues Lys116 and Lys123 each carry the N6-acetyllysine; alternate modification. Residues Lys116 and Lys123 each carry the N6-glutaryllysine; alternate modification. Lys123 carries the N6-(2-hydroxyisobutyryl)lysine; alternate modification. Residue Lys123 is modified to N6-methyllysine; alternate. Lys123 bears the N6-succinyllysine; alternate mark.

It belongs to the histone H3 family. As to quaternary structure, the nucleosome is a histone octamer containing two molecules each of H2A, H2B, H3 and H4 assembled in one H3-H4 heterotetramer and two H2A-H2B heterodimers. The octamer wraps approximately 147 bp of DNA. During nucleosome assembly the chaperone ASF1A interacts with the histone H3-H4 heterodimer (via C-terminus of H3); this interaction is direct. Interacts with DNAJC9, CHAF1A and CHAF1B. Interacts with NASP; NASP is a histone chaperone that stabilizes and maintains a soluble pool of Histone H3-H4 dimers. In terms of processing, acetylation is generally linked to gene activation. Acetylation on Lys-10 (H3K9ac) impairs methylation at Arg-9 (H3R8me2s). Acetylation on Lys-19 (H3K18ac) and Lys-24 (H3K24ac) favors methylation at Arg-18 (H3R17me). Acetylation at Lys-123 (H3K122ac) by EP300/p300 plays a central role in chromatin structure: localizes at the surface of the histone octamer and stimulates transcription, possibly by promoting nucleosome instability. Citrullination at Arg-9 (H3R8ci) and/or Arg-18 (H3R17ci) by PADI4 impairs methylation and represses transcription. Post-translationally, asymmetric dimethylation at Arg-18 (H3R17me2a) by CARM1 is linked to gene activation. Symmetric dimethylation at Arg-9 (H3R8me2s) by PRMT5 is linked to gene repression. Asymmetric dimethylation at Arg-3 (H3R2me2a) by PRMT6 is linked to gene repression and is mutually exclusive with H3 Lys-5 methylation (H3K4me2 and H3K4me3). H3R2me2a is present at the 3' of genes regardless of their transcription state and is enriched on inactive promoters, while it is absent on active promoters. In terms of processing, methylation at Lys-5 (H3K4me), Lys-37 (H3K36me) and Lys-80 (H3K79me) are linked to gene activation. Methylation at Lys-5 (H3K4me) facilitates subsequent acetylation of H3 and H4. Methylation at Lys-80 (H3K79me) is associated with DNA double-strand break (DSB) responses and is a specific target for TP53BP1. Methylation at Lys-10 (H3K9me) and Lys-28 (H3K27me) are linked to gene repression. Methylation at Lys-10 (H3K9me) is a specific target for HP1 proteins (CBX1, CBX3 and CBX5) and prevents subsequent phosphorylation at Ser-11 (H3S10ph) and acetylation of H3 and H4. Methylation at Lys-5 (H3K4me) and Lys-80 (H3K79me) require preliminary monoubiquitination of H2B at 'Lys-120'. Methylation at Lys-10 (H3K9me) and Lys-28 (H3K27me) are enriched in inactive X chromosome chromatin. Monomethylation at Lys-57 (H3K56me1) by EHMT2/G9A in G1 phase promotes interaction with PCNA and is required for DNA replication. Phosphorylated at Thr-4 (H3T3ph) by VRK1. Phosphorylated at Thr-4 (H3T3ph) by HASPIN during prophase and dephosphorylated during anaphase. Phosphorylation at Ser-11 (H3S10ph) by AURKB is crucial for chromosome condensation and cell-cycle progression during mitosis and meiosis. In addition phosphorylation at Ser-11 (H3S10ph) by RPS6KA4 and RPS6KA5 is important during interphase because it enables the transcription of genes following external stimulation, like mitogens, stress, growth factors or UV irradiation and result in the activation of genes, such as c-fos and c-jun. Phosphorylation at Ser-11 (H3S10ph), which is linked to gene activation, prevents methylation at Lys-10 (H3K9me) but facilitates acetylation of H3 and H4. Phosphorylation at Ser-11 (H3S10ph) by AURKB mediates the dissociation of HP1 proteins (CBX1, CBX3 and CBX5) from heterochromatin. Phosphorylation at Ser-11 (H3S10ph) is also an essential regulatory mechanism for neoplastic cell transformation. Phosphorylated at Ser-29 (H3S28ph) by MAP3K20 isoform 1, RPS6KA5 or AURKB during mitosis or upon ultraviolet B irradiation. Phosphorylation at Thr-7 (H3T6ph) by PRKCB is a specific tag for epigenetic transcriptional activation that prevents demethylation of Lys-5 (H3K4me) by LSD1/KDM1A. At centromeres, specifically phosphorylated at Thr-12 (H3T11ph) from prophase to early anaphase, by DAPK3 and PKN1. Phosphorylation at Thr-12 (H3T11ph) by PKN1 or isoform M2 of PKM (PKM2) is a specific tag for epigenetic transcriptional activation that promotes demethylation of Lys-10 (H3K9me) by KDM4C/JMJD2C. Phosphorylation at Tyr-42 (H3Y41ph) by JAK2 promotes exclusion of CBX5 (HP1 alpha) from chromatin. Post-translationally, monoubiquitinated by RAG1 in lymphoid cells, monoubiquitination is required for V(D)J recombination. Ubiquitinated by the CUL4-DDB-RBX1 complex in response to ultraviolet irradiation. This may weaken the interaction between histones and DNA and facilitate DNA accessibility to repair proteins. In terms of processing, lysine deamination at Lys-5 (H3K4all) to form allysine is mediated by LOXL2. Allysine formation by LOXL2 only takes place on H3K4me3 and results in gene repression. Crotonylation (Kcr) is specifically present in male germ cells and marks testis-specific genes in post-meiotic cells, including X-linked genes that escape sex chromosome inactivation in haploid cells. Crotonylation marks active promoters and enhancers and confers resistance to transcriptional repressors. It is also associated with post-meiotically activated genes on autosomes. Post-translationally, butyrylation of histones marks active promoters and competes with histone acetylation. It is present during late spermatogenesis. In terms of processing, succinylation at Lys-80 (H3K79succ) by KAT2A takes place with a maximum frequency around the transcription start sites of genes. It gives a specific tag for epigenetic transcription activation. Desuccinylation at Lys-123 (H3K122succ) by SIRT7 in response to DNA damage promotes chromatin condensation and double-strand breaks (DSBs) repair. Serine ADP-ribosylation by PARP1 or PARP2 constitutes the primary form of ADP-ribosylation of proteins in response to DNA damage. Serine ADP-ribosylation at Ser-11 (H3S10ADPr) promotes recruitment of CHD1L. H3S10ADPr is mutually exclusive with phosphorylation at Ser-11 (H3S10ph) and impairs acetylation at Lys-10 (H3K9ac). Post-translationally, serotonylated by TGM2 at Gln-6 (H3Q5ser) during serotonergic neuron differentiation. H3Q5ser is associated with trimethylation of Lys-5 (H3K4me3) and enhances general transcription factor IID (TFIID) complex-binding to H3K4me3, thereby facilitating transcription. In terms of processing, dopaminylated by TGM2 at Gln-6 (H3Q5dop) in ventral tegmental area (VTA) neurons. H3Q5dop mediates neurotransmission-independent role of nuclear dopamine by regulating relapse-related transcriptional plasticity in the reward system. Lactylated in macrophages by EP300/P300 by using lactoyl-CoA directly derived from endogenous or exogenous lactate, leading to stimulates gene transcription.

It localises to the nucleus. Its subcellular location is the chromosome. In terms of biological role, core component of nucleosome. Nucleosomes wrap and compact DNA into chromatin, limiting DNA accessibility to the cellular machineries which require DNA as a template. Histones thereby play a central role in transcription regulation, DNA repair, DNA replication and chromosomal stability. DNA accessibility is regulated via a complex set of post-translational modifications of histones, also called histone code, and nucleosome remodeling. This is Histone H3.2 from Cricetulus longicaudatus (Long-tailed dwarf hamster).